Here is a 409-residue protein sequence, read N- to C-terminus: Protein naked cuticle homolog 2-like (409 aa).

A lipid anchor (N-myristoyl glycine) is attached at Gly-2. In terms of domain architecture, EF-hand spans 109–144 (AEDNRQEWVFTLYDFDNSGKVTKEDMSSLMHTIYDV). Residues Asp-122, Asp-124, Ser-126, Lys-128, and Asp-133 each coordinate Ca(2+). Disordered regions lie at residues 166–224 (VTPE…YCVD), 243–315 (TSRF…RFPG), 346–367 (NHTH…IRSR), and 388–409 (RHEH…YHQT). 2 stretches are compositionally biased toward basic and acidic residues: residues 171–185 (AARR…RETS) and 193–224 (VRSE…YCVD). Positions 247 to 268 (DSSSPDADQDPPSRSSHSQSRP) are enriched in low complexity. Basic residues predominate over residues 389–409 (HEHHHHHEHHHHHHYHHYHQT).

Belongs to the NKD family.

The protein localises to the cell membrane. It localises to the cytoplasm. Functionally, cell autonomous antagonist of both the canonical and non-canonical Wnt signaling pathways. In Danio rerio (Zebrafish), this protein is Protein naked cuticle homolog 2-like (nkd2l).